The following is a 175-amino-acid chain: Acireductone dioxygenase (175 aa).

4 residues coordinate Fe(2+): histidine 81, histidine 83, glutamate 87, and histidine 126. Ni(2+) is bound by residues histidine 81, histidine 83, glutamate 87, and histidine 126.

Belongs to the acireductone dioxygenase (ARD) family. Requires Fe(2+) as cofactor. Ni(2+) serves as cofactor.

The protein resides in the cytoplasm. It localises to the nucleus. It carries out the reaction 1,2-dihydroxy-5-(methylsulfanyl)pent-1-en-3-one + O2 = 4-methylsulfanyl-2-oxobutanoate + formate + 2 H(+). The enzyme catalyses 1,2-dihydroxy-5-(methylsulfanyl)pent-1-en-3-one + O2 = 3-(methylsulfanyl)propanoate + CO + formate + 2 H(+). Its pathway is amino-acid biosynthesis; L-methionine biosynthesis via salvage pathway; L-methionine from S-methyl-5-thio-alpha-D-ribose 1-phosphate: step 5/6. Catalyzes 2 different reactions between oxygen and the acireductone 1,2-dihydroxy-3-keto-5-methylthiopentene (DHK-MTPene) depending upon the metal bound in the active site. Fe-containing acireductone dioxygenase (Fe-ARD) produces formate and 2-keto-4-methylthiobutyrate (KMTB), the alpha-ketoacid precursor of methionine in the methionine recycle pathway. Ni-containing acireductone dioxygenase (Ni-ARD) produces methylthiopropionate, carbon monoxide and formate, and does not lie on the methionine recycle pathway. The protein is Acireductone dioxygenase of Phaeosphaeria nodorum (strain SN15 / ATCC MYA-4574 / FGSC 10173) (Glume blotch fungus).